Consider the following 48-residue polypeptide: Delta-stichotoxin-Hmg4a (48 aa).

3 disulfides stabilise this stretch: Cys-3/Cys-43, Cys-5/Cys-33, and Cys-26/Cys-44.

This sequence belongs to the sea anemone sodium channel inhibitory toxin family. Type II subfamily.

Its subcellular location is the secreted. The protein localises to the nematocyst. Binds specifically to voltage-gated sodium channels (Nav), thereby delaying their inactivation during signal transduction. Its toxicity is weaker than that of RpIII (AC P08380). This chain is Delta-stichotoxin-Hmg4a, found in Heteractis magnifica (Magnificent sea anemone).